The primary structure comprises 658 residues: DNA mismatch repair protein MutL (658 aa).

Positions Arg-114 to Lys-130 are enriched in basic and acidic residues. Residues Arg-114–Ala-137 are disordered.

The protein belongs to the DNA mismatch repair MutL/HexB family.

Its function is as follows. This protein is involved in the repair of mismatches in DNA. It is required for dam-dependent methyl-directed DNA mismatch repair. May act as a 'molecular matchmaker', a protein that promotes the formation of a stable complex between two or more DNA-binding proteins in an ATP-dependent manner without itself being part of a final effector complex. This chain is DNA mismatch repair protein MutL, found in Neisseria meningitidis serogroup C / serotype 2a (strain ATCC 700532 / DSM 15464 / FAM18).